The sequence spans 272 residues: uncharacterized protein (272 aa).

Active-site residues include aspartate 71 and glutamate 163.

Belongs to the glycosyl hydrolase 25 family.

This is an uncharacterized protein from Escherichia coli (strain K12).